A 651-amino-acid polypeptide reads, in one-letter code: PTS system sucrose-specific EIIBCA component (651 aa).

The region spanning 3-86 (HQEVADRVLN…IVKTGLKEVT (84 aa)) is the PTS EIIB type-1 domain. Cys25 acts as the Phosphocysteine intermediate; for EIIB activity in catalysis. 10 consecutive transmembrane segments (helical) span residues 109–129 (VLSD…LLMA), 158–178 (MINA…GFSA), 182–202 (FGGN…PSLV), 204–224 (GYSV…VFGL), 226–246 (VAQA…FILA), 264–284 (FTPM…VGPV), 303–323 (TGWI…ITGL), 345–365 (FIFP…LAIF), 404–424 (FVFA…FHVL), and 444–464 (IPAF…PTFI). Positions 121-481 (LVAGGLLMAL…DDRDQVKSPA (361 aa)) constitute a PTS EIIC type-1 domain. Positions 510 to 614 (DQVFSAEIMG…DPTVMLIVTN (105 aa)) constitute a PTS EIIA type-1 domain. The active-site Tele-phosphohistidine intermediate; for EIIA activity is the His562.

The protein localises to the cell membrane. The enzyme catalyses N(pros)-phospho-L-histidyl-[protein](out) + sucrose = sucrose 6(G)-phosphate(in) + L-histidyl-[protein]. Its function is as follows. The phosphoenolpyruvate-dependent sugar phosphotransferase system (sugar PTS), a major carbohydrate active transport system, catalyzes the phosphorylation of incoming sugar substrates concomitantly with their translocation across the cell membrane. This system is involved in sucrose transport. The sequence is that of PTS system sucrose-specific EIIBCA component (scrA) from Pediococcus pentosaceus.